The sequence spans 216 residues: Elongation factor Ts (216 aa).

The segment at 81–84 (TDFV) is involved in Mg(2+) ion dislocation from EF-Tu.

This sequence belongs to the EF-Ts family.

The protein resides in the cytoplasm. Its function is as follows. Associates with the EF-Tu.GDP complex and induces the exchange of GDP to GTP. It remains bound to the aminoacyl-tRNA.EF-Tu.GTP complex up to the GTP hydrolysis stage on the ribosome. This is Elongation factor Ts from Geobacter sulfurreducens (strain ATCC 51573 / DSM 12127 / PCA).